The primary structure comprises 445 residues: Lipoyl synthase, mitochondrial (445 aa).

A mitochondrion-targeting transit peptide spans 1–40; the sequence is MRPGSWRVITHYGFTGPIQRLQAPLRRSLARAAALSTRSY. Residues 42–71 are compositionally biased toward low complexity; it reads TIPSAPSSQPTSQESSPAASASASASAPAT. Residues 42-77 form a disordered region; sequence TIPSAPSSQPTSQESSPAASASASASAPATKPRPTY. [4Fe-4S] cluster-binding residues include Cys157, Cys162, Cys168, Cys188, Cys192, Cys195, and Ser405. In terms of domain architecture, Radical SAM core spans 171–394; that stretch reads GSNKAAATAT…RQRALDMGFL (224 aa).

Belongs to the radical SAM superfamily. Lipoyl synthase family. The cofactor is [4Fe-4S] cluster.

The protein localises to the mitochondrion. The enzyme catalyses [[Fe-S] cluster scaffold protein carrying a second [4Fe-4S](2+) cluster] + N(6)-octanoyl-L-lysyl-[protein] + 2 oxidized [2Fe-2S]-[ferredoxin] + 2 S-adenosyl-L-methionine + 4 H(+) = [[Fe-S] cluster scaffold protein] + N(6)-[(R)-dihydrolipoyl]-L-lysyl-[protein] + 4 Fe(3+) + 2 hydrogen sulfide + 2 5'-deoxyadenosine + 2 L-methionine + 2 reduced [2Fe-2S]-[ferredoxin]. The protein operates within protein modification; protein lipoylation via endogenous pathway; protein N(6)-(lipoyl)lysine from octanoyl-[acyl-carrier-protein]: step 2/2. In terms of biological role, catalyzes the radical-mediated insertion of two sulfur atoms into the C-6 and C-8 positions of the octanoyl moiety bound to the lipoyl domains of lipoate-dependent enzymes, thereby converting the octanoylated domains into lipoylated derivatives. The chain is Lipoyl synthase, mitochondrial from Sordaria macrospora (strain ATCC MYA-333 / DSM 997 / K(L3346) / K-hell).